The following is a 111-amino-acid chain: Anti-adapter protein IraM (111 aa).

It belongs to the IraM/RssC family.

The protein localises to the cytoplasm. In terms of biological role, involved in the stabilization of the sigma stress factor RpoS. This is Anti-adapter protein IraM from Cronobacter sakazakii (strain ATCC BAA-894) (Enterobacter sakazakii).